The primary structure comprises 239 residues: Protein GrpE (239 aa).

Disordered stretches follow at residues methionine 1–glutamate 50 and methionine 209–valine 239. Polar residues predominate over residues valine 16–alanine 30. Residues glutamate 218–valine 239 show a composition bias toward acidic residues.

This sequence belongs to the GrpE family. In terms of assembly, homodimer.

It localises to the cytoplasm. Participates actively in the response to hyperosmotic and heat shock by preventing the aggregation of stress-denatured proteins, in association with DnaK and GrpE. It is the nucleotide exchange factor for DnaK and may function as a thermosensor. Unfolded proteins bind initially to DnaJ; upon interaction with the DnaJ-bound protein, DnaK hydrolyzes its bound ATP, resulting in the formation of a stable complex. GrpE releases ADP from DnaK; ATP binding to DnaK triggers the release of the substrate protein, thus completing the reaction cycle. Several rounds of ATP-dependent interactions between DnaJ, DnaK and GrpE are required for fully efficient folding. In Prochlorococcus marinus (strain MIT 9312), this protein is Protein GrpE.